Reading from the N-terminus, the 291-residue chain is Proteasome subunit beta (291 aa).

The propeptide at 1–56 is removed in mature form; by autocatalysis; it reads MTRSFPDRLPTNLAFPGISVINQSSFVDLLRRQAPELLPVSLGGGQSGGGQQLSHG. Thr-57 (nucleophile) is an active-site residue.

It belongs to the peptidase T1B family. As to quaternary structure, the 20S proteasome core is composed of 14 alpha and 14 beta subunits that assemble into four stacked heptameric rings, resulting in a barrel-shaped structure. The two inner rings, each composed of seven catalytic beta subunits, are sandwiched by two outer rings, each composed of seven alpha subunits. The catalytic chamber with the active sites is on the inside of the barrel. Has a gated structure, the ends of the cylinder being occluded by the N-termini of the alpha-subunits. Is capped by the proteasome-associated ATPase, ARC.

It localises to the cytoplasm. The catalysed reaction is Cleavage of peptide bonds with very broad specificity.. The protein operates within protein degradation; proteasomal Pup-dependent pathway. With respect to regulation, the formation of the proteasomal ATPase ARC-20S proteasome complex, likely via the docking of the C-termini of ARC into the intersubunit pockets in the alpha-rings, may trigger opening of the gate for substrate entry. Interconversion between the open-gate and close-gate conformations leads to a dynamic regulation of the 20S proteasome proteolysis activity. Functionally, component of the proteasome core, a large protease complex with broad specificity involved in protein degradation. This Mycobacterium leprae (strain Br4923) protein is Proteasome subunit beta.